We begin with the raw amino-acid sequence, 235 residues long: Pyridoxine 5'-phosphate synthase (235 aa).

Residue N6 coordinates 3-amino-2-oxopropyl phosphate. 8-9 contributes to the 1-deoxy-D-xylulose 5-phosphate binding site; the sequence is DH. R17 lines the 3-amino-2-oxopropyl phosphate pocket. H42 acts as the Proton acceptor in catalysis. Residues R44 and H49 each contribute to the 1-deoxy-D-xylulose 5-phosphate site. E69 (proton acceptor) is an active-site residue. T99 provides a ligand contact to 1-deoxy-D-xylulose 5-phosphate. H189 (proton donor) is an active-site residue. 3-amino-2-oxopropyl phosphate is bound by residues G190 and 211–212; that span reads GH.

It belongs to the PNP synthase family. Homooctamer; tetramer of dimers.

Its subcellular location is the cytoplasm. The enzyme catalyses 3-amino-2-oxopropyl phosphate + 1-deoxy-D-xylulose 5-phosphate = pyridoxine 5'-phosphate + phosphate + 2 H2O + H(+). It functions in the pathway cofactor biosynthesis; pyridoxine 5'-phosphate biosynthesis; pyridoxine 5'-phosphate from D-erythrose 4-phosphate: step 5/5. Catalyzes the complicated ring closure reaction between the two acyclic compounds 1-deoxy-D-xylulose-5-phosphate (DXP) and 3-amino-2-oxopropyl phosphate (1-amino-acetone-3-phosphate or AAP) to form pyridoxine 5'-phosphate (PNP) and inorganic phosphate. In Chlorobium chlorochromatii (strain CaD3), this protein is Pyridoxine 5'-phosphate synthase.